The chain runs to 325 residues: Aspartate carbamoyltransferase catalytic subunit (325 aa).

Residues Arg64 and Thr65 each contribute to the carbamoyl phosphate site. Residue Lys92 coordinates L-aspartate. Residues Arg114, His142, and Gln145 each contribute to the carbamoyl phosphate site. Arg176 and Arg230 together coordinate L-aspartate. Carbamoyl phosphate-binding residues include Gly271 and Pro272.

It belongs to the aspartate/ornithine carbamoyltransferase superfamily. ATCase family. Heterododecamer (2C3:3R2) of six catalytic PyrB chains organized as two trimers (C3), and six regulatory PyrI chains organized as three dimers (R2).

It catalyses the reaction carbamoyl phosphate + L-aspartate = N-carbamoyl-L-aspartate + phosphate + H(+). Its pathway is pyrimidine metabolism; UMP biosynthesis via de novo pathway; (S)-dihydroorotate from bicarbonate: step 2/3. Functionally, catalyzes the condensation of carbamoyl phosphate and aspartate to form carbamoyl aspartate and inorganic phosphate, the committed step in the de novo pyrimidine nucleotide biosynthesis pathway. The polypeptide is Aspartate carbamoyltransferase catalytic subunit (Nitratidesulfovibrio vulgaris (strain DSM 19637 / Miyazaki F) (Desulfovibrio vulgaris)).